We begin with the raw amino-acid sequence, 452 residues long: Trigger factor (452 aa).

The 86-residue stretch at 169–254 folds into the PPIase FKBP-type domain; that stretch reads GDQLLIDFVG…VQEVRAPVDG (86 aa).

Belongs to the FKBP-type PPIase family. Tig subfamily.

The protein localises to the cytoplasm. It catalyses the reaction [protein]-peptidylproline (omega=180) = [protein]-peptidylproline (omega=0). Functionally, involved in protein export. Acts as a chaperone by maintaining the newly synthesized protein in an open conformation. Functions as a peptidyl-prolyl cis-trans isomerase. This Caulobacter vibrioides (strain ATCC 19089 / CIP 103742 / CB 15) (Caulobacter crescentus) protein is Trigger factor (tig).